Consider the following 180-residue polypeptide: Isopentenyl-diphosphate Delta-isomerase (180 aa).

Residues histidine 22 and histidine 28 each contribute to the Mn(2+) site. The 135-residue stretch at leucine 26–isoleucine 160 folds into the Nudix hydrolase domain. Cysteine 62 is a catalytic residue. Position 62 (cysteine 62) interacts with Mg(2+). Mn(2+) is bound at residue histidine 64. Glutamate 82 is a binding site for Mg(2+). Glutamate 108 and glutamate 110 together coordinate Mn(2+). Glutamate 110 is an active-site residue.

Belongs to the IPP isomerase type 1 family. It depends on Mg(2+) as a cofactor. Requires Mn(2+) as cofactor.

The protein resides in the cytoplasm. The catalysed reaction is isopentenyl diphosphate = dimethylallyl diphosphate. The protein operates within isoprenoid biosynthesis; dimethylallyl diphosphate biosynthesis; dimethylallyl diphosphate from isopentenyl diphosphate: step 1/1. In terms of biological role, catalyzes the 1,3-allylic rearrangement of the homoallylic substrate isopentenyl (IPP) to its highly electrophilic allylic isomer, dimethylallyl diphosphate (DMAPP). This chain is Isopentenyl-diphosphate Delta-isomerase, found in Ruegeria pomeroyi (strain ATCC 700808 / DSM 15171 / DSS-3) (Silicibacter pomeroyi).